Reading from the N-terminus, the 412-residue chain is Mast cell carboxypeptidase A (412 aa).

Residues 1 to 10 (LMGVIYSTLA) form the signal peptide. Residues 11–104 (IAPVQFDREK…IDKQFDVKEE (94 aa)) constitute a propeptide, activation peptide. One can recognise a Peptidase M14 domain in the interval 113 to 407 (KYNDWNKIVS…LSVKFIAKYI (295 aa)). 2 disulfides stabilise this stretch: C168–C181 and C240–C263. Zn(2+) is bound by residues H171 and E174. H299 lines the Zn(2+) pocket. The active-site Proton donor/acceptor is the E373.

It belongs to the peptidase M14 family. Zn(2+) serves as cofactor.

It is found in the cytoplasmic vesicle. The protein resides in the secretory vesicle. The enzyme catalyses Release of a C-terminal amino acid, but little or no action with -Asp, -Glu, -Arg, -Lys or -Pro.. This Rattus norvegicus (Rat) protein is Mast cell carboxypeptidase A (Cpa3).